The chain runs to 391 residues: Phosphoglycerate kinase (391 aa).

Substrate is bound by residues 21 to 23, Arg-36, 59 to 62, Arg-113, and Arg-146; these read DLN and HLGR. ATP contacts are provided by residues Lys-197, Glu-319, and 345 to 348; that span reads GGDT.

The protein belongs to the phosphoglycerate kinase family. As to quaternary structure, monomer.

It is found in the cytoplasm. It carries out the reaction (2R)-3-phosphoglycerate + ATP = (2R)-3-phospho-glyceroyl phosphate + ADP. It participates in carbohydrate degradation; glycolysis; pyruvate from D-glyceraldehyde 3-phosphate: step 2/5. The protein is Phosphoglycerate kinase of Pseudoalteromonas translucida (strain TAC 125).